A 389-amino-acid chain; its full sequence is Putative DNA processing protein DprA (389 aa).

The protein belongs to the DprA/Smf family.

Its function is as follows. May help load RecA onto ssDNA. This Mycobacterium tuberculosis (strain CDC 1551 / Oshkosh) protein is Putative DNA processing protein DprA.